The chain runs to 791 residues: KN motif and ankyrin repeat domain-containing protein 3 (791 aa).

Disordered stretches follow at residues 1–37, 56–181, 254–312, 401–425, and 463–514; these read MAKFVLNQNLPDLGGPPLYPGPTGSARSPSSPYSVET, RGPA…GPAQ, ATSD…ETRE, GCTEKTTQTELPVENQPRPTAGDEM, and YESS…GDCE. Polar residues predominate over residues 25–34; it reads SARSPSSPYS. Residues 105–125 are compositionally biased toward low complexity; it reads LSPGAFPGLSLPPLSPRSLSR. Residues 127-149 show a composition bias toward basic and acidic residues; sequence PRVEHTLLETSRRLEQAQARERA. Phosphoserine is present on residues Ser151, Ser159, Ser163, Ser166, Ser167, and Ser176. The span at 158 to 180 shows a compositional bias: low complexity; it reads RSPRGSGRSSPAPNPALASPGPA. Residues 180-229 are a coiled coil; that stretch reads AQLQLVREQMAAALRRLRELEDQARALPELQEQVRALRAEKARLLAGRVQ. Basic and acidic residues-rich tracts occupy residues 254–280 and 293–312; these read ATSDRGVRSRASPRAEDPDGLAARRSE and PDGEPRTRETGTEVVPETRE. Residue Ser279 is modified to Phosphoserine. Residues 401–410 show a composition bias toward polar residues; the sequence is GCTEKTTQTE. Positions 485-496 are enriched in low complexity; the sequence is SSSSGSDDSSGG. The span at 505 to 514 shows a compositional bias: basic and acidic residues; that stretch reads HNDKDAGDCE. ANK repeat units follow at residues 606 to 636, 640 to 677, 679 to 708, 712 to 742, and 746 to 775; these read NGNTALHYSVSHGNLAISSLLLDTGVCDVNH, AGYSALMLAALTSVGQEEEDMAVAQRLFSMGDVNAKAS, TGQTALMLAISHGHQDMVAALLECGADVNV, DGATALMCASEYGRLDTVQLLLAQPGCDLTI, and EGTSALAIALEAEQDEVAALLHAHLTSNHQ. The segment covering 772–783 has biased composition (polar residues); sequence SNHQGQSSTGSP. Residues 772-791 form a disordered region; sequence SNHQGQSSTGSPTAKECNDK.

Its function is as follows. May be involved in the control of cytoskeleton formation by regulating actin polymerization. This is KN motif and ankyrin repeat domain-containing protein 3 from Mus musculus (Mouse).